Here is a 181-residue protein sequence, read N- to C-terminus: TATA-box-binding protein (181 aa).

Repeat copies occupy residues 7 to 83 and 98 to 173.

The protein belongs to the TBP family.

Functionally, general factor that plays a role in the activation of archaeal genes transcribed by RNA polymerase. Binds specifically to the TATA box promoter element which lies close to the position of transcription initiation. The protein is TATA-box-binding protein (tbp) of Methanothermococcus thermolithotrophicus (Methanococcus thermolithotrophicus).